The sequence spans 338 residues: Glycerol-3-phosphate dehydrogenase [NAD(P)+] (338 aa).

Ser13, Trp14, and Lys108 together coordinate NADPH. Lys108, Gly139, and Ser141 together coordinate sn-glycerol 3-phosphate. Ala143 serves as a coordination point for NADPH. Sn-glycerol 3-phosphate contacts are provided by Lys194, Asp247, Ser257, Arg258, and Asn259. Lys194 functions as the Proton acceptor in the catalytic mechanism. Arg258 contacts NADPH. The NADPH site is built by Val282 and Glu284.

Belongs to the NAD-dependent glycerol-3-phosphate dehydrogenase family.

It localises to the cytoplasm. It carries out the reaction sn-glycerol 3-phosphate + NAD(+) = dihydroxyacetone phosphate + NADH + H(+). The catalysed reaction is sn-glycerol 3-phosphate + NADP(+) = dihydroxyacetone phosphate + NADPH + H(+). Its pathway is membrane lipid metabolism; glycerophospholipid metabolism. Catalyzes the reduction of the glycolytic intermediate dihydroxyacetone phosphate (DHAP) to sn-glycerol 3-phosphate (G3P), the key precursor for phospholipid synthesis. This Streptococcus pneumoniae (strain Taiwan19F-14) protein is Glycerol-3-phosphate dehydrogenase [NAD(P)+].